The chain runs to 254 residues: Ditrans,polycis-undecaprenyl-diphosphate synthase ((2E,6E)-farnesyl-diphosphate specific) (254 aa).

The active site involves Asp-25. Asp-25 is a binding site for Mg(2+). Substrate-binding positions include 26-29 (GNGR), Trp-30, Arg-38, His-42, and 70-72 (SSE). The Proton acceptor role is filled by Asn-73. Trp-74, Arg-76, and Arg-193 together coordinate substrate. His-198 contacts Mg(2+). 199 to 201 (RIS) serves as a coordination point for substrate. Glu-212 is a binding site for Mg(2+).

It belongs to the UPP synthase family. Homodimer. The cofactor is Mg(2+).

The enzyme catalyses 8 isopentenyl diphosphate + (2E,6E)-farnesyl diphosphate = di-trans,octa-cis-undecaprenyl diphosphate + 8 diphosphate. Functionally, catalyzes the sequential condensation of isopentenyl diphosphate (IPP) with (2E,6E)-farnesyl diphosphate (E,E-FPP) to yield (2Z,6Z,10Z,14Z,18Z,22Z,26Z,30Z,34E,38E)-undecaprenyl diphosphate (di-trans,octa-cis-UPP). UPP is the precursor of glycosyl carrier lipid in the biosynthesis of bacterial cell wall polysaccharide components such as peptidoglycan and lipopolysaccharide. This is Ditrans,polycis-undecaprenyl-diphosphate synthase ((2E,6E)-farnesyl-diphosphate specific) from Photorhabdus laumondii subsp. laumondii (strain DSM 15139 / CIP 105565 / TT01) (Photorhabdus luminescens subsp. laumondii).